A 252-amino-acid chain; its full sequence is Probable anguibactin biosynthesis thioesterase AngT (252 aa).

Active-site residues include serine 92 and histidine 229.

This sequence belongs to the thioesterase family.

The protein operates within siderophore biosynthesis; anguibactin biosynthesis. Functionally, probable thioesterase. Involved in anguibactin production, but is not essential for virulence or iron transport gene expression. The polypeptide is Probable anguibactin biosynthesis thioesterase AngT (angT) (Vibrio anguillarum (strain ATCC 68554 / 775) (Listonella anguillarum)).